Consider the following 344-residue polypeptide: UDP-3-O-acylglucosamine N-acyltransferase (344 aa).

His-244 (proton acceptor) is an active-site residue.

Belongs to the transferase hexapeptide repeat family. LpxD subfamily. In terms of assembly, homotrimer.

The catalysed reaction is a UDP-3-O-[(3R)-3-hydroxyacyl]-alpha-D-glucosamine + a (3R)-hydroxyacyl-[ACP] = a UDP-2-N,3-O-bis[(3R)-3-hydroxyacyl]-alpha-D-glucosamine + holo-[ACP] + H(+). It participates in bacterial outer membrane biogenesis; LPS lipid A biosynthesis. Catalyzes the N-acylation of UDP-3-O-acylglucosamine using 3-hydroxyacyl-ACP as the acyl donor. Is involved in the biosynthesis of lipid A, a phosphorylated glycolipid that anchors the lipopolysaccharide to the outer membrane of the cell. This chain is UDP-3-O-acylglucosamine N-acyltransferase, found in Pseudoalteromonas atlantica (strain T6c / ATCC BAA-1087).